The following is a 253-amino-acid chain: Small ribosomal subunit protein uS2 (253 aa).

This sequence belongs to the universal ribosomal protein uS2 family.

The polypeptide is Small ribosomal subunit protein uS2 (Hahella chejuensis (strain KCTC 2396)).